Reading from the N-terminus, the 97-residue chain is Insertion element IS2 uncharacterized 11.1 kDa protein (97 aa).

The polypeptide is Insertion element IS2 uncharacterized 11.1 kDa protein (Escherichia coli).